The primary structure comprises 253 residues: Imidazole glycerol phosphate synthase subunit HisF (253 aa).

Active-site residues include D11 and D130.

The protein belongs to the HisA/HisF family. Heterodimer of HisH and HisF.

It is found in the cytoplasm. It catalyses the reaction 5-[(5-phospho-1-deoxy-D-ribulos-1-ylimino)methylamino]-1-(5-phospho-beta-D-ribosyl)imidazole-4-carboxamide + L-glutamine = D-erythro-1-(imidazol-4-yl)glycerol 3-phosphate + 5-amino-1-(5-phospho-beta-D-ribosyl)imidazole-4-carboxamide + L-glutamate + H(+). It functions in the pathway amino-acid biosynthesis; L-histidine biosynthesis; L-histidine from 5-phospho-alpha-D-ribose 1-diphosphate: step 5/9. IGPS catalyzes the conversion of PRFAR and glutamine to IGP, AICAR and glutamate. The HisF subunit catalyzes the cyclization activity that produces IGP and AICAR from PRFAR using the ammonia provided by the HisH subunit. The protein is Imidazole glycerol phosphate synthase subunit HisF of Myxococcus xanthus (strain DK1622).